Reading from the N-terminus, the 497-residue chain is Protein nucleotidyltransferase YdiU (497 aa).

ATP contacts are provided by Gly-88, Gly-90, Arg-91, Lys-110, Asp-122, Gly-123, Arg-173, and Arg-180. The active-site Proton acceptor is Asp-249. The Mg(2+) site is built by Asn-250 and Asp-259. Asp-259 contributes to the ATP binding site. Residues 477 to 497 are disordered; the sequence is FARYAEPPEGGGRGYRTFCGT.

It belongs to the SELO family. Mg(2+) serves as cofactor. The cofactor is Mn(2+).

The catalysed reaction is L-seryl-[protein] + ATP = 3-O-(5'-adenylyl)-L-seryl-[protein] + diphosphate. It catalyses the reaction L-threonyl-[protein] + ATP = 3-O-(5'-adenylyl)-L-threonyl-[protein] + diphosphate. The enzyme catalyses L-tyrosyl-[protein] + ATP = O-(5'-adenylyl)-L-tyrosyl-[protein] + diphosphate. It carries out the reaction L-histidyl-[protein] + UTP = N(tele)-(5'-uridylyl)-L-histidyl-[protein] + diphosphate. The catalysed reaction is L-seryl-[protein] + UTP = O-(5'-uridylyl)-L-seryl-[protein] + diphosphate. It catalyses the reaction L-tyrosyl-[protein] + UTP = O-(5'-uridylyl)-L-tyrosyl-[protein] + diphosphate. Its function is as follows. Nucleotidyltransferase involved in the post-translational modification of proteins. It can catalyze the addition of adenosine monophosphate (AMP) or uridine monophosphate (UMP) to a protein, resulting in modifications known as AMPylation and UMPylation. This Methylorubrum extorquens (strain PA1) (Methylobacterium extorquens) protein is Protein nucleotidyltransferase YdiU.